The chain runs to 74 residues: Conotoxin AbVII (74 aa).

The signal sequence occupies residues Val1–Ala17. A propeptide spanning residues Glu18–Thr40 is cleaved from the precursor. Positions Thr19 to Lys41 are disordered. Disulfide bonds link Cys43-Cys57, Cys50-Cys61, and Cys56-Cys68.

This sequence belongs to the conotoxin O1 superfamily. As to expression, expressed by the venom duct.

It localises to the secreted. The protein is Conotoxin AbVII of Conus abbreviatus (Abbreviated cone).